The chain runs to 320 residues: tRNA uridine(34) hydroxylase (320 aa).

Residues 123–217 (EDENTVILDA…YGKDPETKGQ (95 aa)) enclose the Rhodanese domain. C177 serves as the catalytic Cysteine persulfide intermediate.

This sequence belongs to the TrhO family.

The enzyme catalyses uridine(34) in tRNA + AH2 + O2 = 5-hydroxyuridine(34) in tRNA + A + H2O. Catalyzes oxygen-dependent 5-hydroxyuridine (ho5U) modification at position 34 in tRNAs. The chain is tRNA uridine(34) hydroxylase from Staphylococcus epidermidis (strain ATCC 12228 / FDA PCI 1200).